A 1852-amino-acid polypeptide reads, in one-letter code: Voltage-dependent L-type calcium channel subunit alpha-1S (1852 aa).

Residues 1–23 form a disordered region; sequence MEPPSPQDEGLRKKQPKKPVPEI. Residues 1–51 lie on the Cytoplasmic side of the membrane; it reads MEPPSPQDEGLRKKQPKKPVPEILPRPPRALFCLTLQNPLRKACISIVEWK. Residues 38 to 337 form an I repeat; sequence NPLRKACISI…LVLGVLSGEF (300 aa). Residues 52–70 form a helical membrane-spanning segment; sequence PFETIILLTIFANCVALAV. Residues 71 to 85 are Extracellular-facing; that stretch reads YLPMPEDDNNTLNLG. N-linked (GlcNAc...) asparagine glycosylation occurs at Asn79. Residues 86-106 form a helical membrane-spanning segment; that stretch reads LEKLEYFFLIVFSIEAAMKII. Topologically, residues 107 to 115 are cytoplasmic; it reads AYGFLFHQD. A helical transmembrane segment spans residues 116 to 136; it reads AYLRSGWNVLDFIIVFLGVFT. The Extracellular segment spans residues 137 to 160; the sequence is VILEQVNIIQTNTAPMSSKGAGLD. Residues 161-179 form a helical membrane-spanning segment; sequence VKALRAFRVLRPLRLVSGV. At 180–196 the chain is on the cytoplasmic side; the sequence is PSLQVVLNSIFKAMLPL. The helical transmembrane segment at 197-218 threads the bilayer; the sequence is FHIALLVLFMVIIYAIIGLELF. The Extracellular portion of the chain corresponds to 219-279; sequence KGKMHKTCYF…HGITHFDNFG (61 aa). Cystine bridges form between Cys226–Cys254 and Cys245–Cys261. The N-linked (GlcNAc...) asparagine glycan is linked to Asn257. The segment at residues 280-301 is an intramembrane region (pore-forming); the sequence is FSMLTVYQCISMEGWTDVLYWV. The short motif at 290 to 293 is the Selectivity filter of repeat I element; it reads SMEG. Ca(2+) is bound at residue Glu292. Residues 302–309 lie on the Extracellular side of the membrane; the sequence is NDAIGNEW. A helical transmembrane segment spans residues 310–330; sequence PWIYFVTLILLGSFFILNLVL. The Cytoplasmic segment spans residues 331–432; the sequence is GVLSGEFTKE…WKCHDLVKSK (102 aa). The segment at 357–374 is binding to the beta subunit; it reads QQLEEDLRGYMSWITQGE. Residues Ser393 and Ser397 each carry the phosphoserine modification. One copy of the II repeat lies at 418–664; that stretch reads NRVFRWKCHD…VFLAIAVDNL (247 aa). A helical membrane pass occupies residues 433-451; the sequence is VFYWLVILIVALNTLSIAS. Residues 452–462 are Extracellular-facing; that stretch reads EHHNQPLWLTH. A helical transmembrane segment spans residues 463-483; the sequence is LQDVANRVLLTLFTIEMLMKM. Over 484–494 the chain is Cytoplasmic; the sequence is YGLGLRQYFMS. The chain crosses the membrane as a helical span at residues 495–514; it reads IFNRFDCFVVCSGILEILLV. Topologically, residues 515 to 523 are extracellular; it reads ESGAMSPLG. Residues 524–542 form a helical membrane-spanning segment; the sequence is ISVLRCIRLLRLFKITKYW. The Cytoplasmic portion of the chain corresponds to 543–561; sequence TSLSNLVASLLNSIRSIAS. The chain crosses the membrane as a helical span at residues 562-581; that stretch reads LLLLLFLFIIIFALLGMQLF. The Extracellular segment spans residues 582–601; it reads GGRYDFEDTEVRRSNFDNFP. Residues 602-623 constitute an intramembrane region (pore-forming); it reads QALISVFQVLTGEDWNSVMYNG. A Selectivity filter of repeat II motif is present at residues 612-615; that stretch reads TGED. A Ca(2+)-binding site is contributed by Glu614. Topologically, residues 624-633 are extracellular; sequence IMAYGGPTYP. The helical transmembrane segment at 634–653 threads the bilayer; the sequence is GVLVCIYFIILFVCGNYILL. The Cytoplasmic portion of the chain corresponds to 654-799; sequence NVFLAIAVDN…VLCHRIVNAT (146 aa). Disordered stretches follow at residues 675–712 and 731–757; these read KAKA…SKGE and EVKD…VSPR. Phosphoserine; by PKA is present on Ser687. The segment covering 690-711 has biased composition (basic and acidic residues); it reads LPDKSEEERATVTKKLEQKSKG. Over residues 742 to 751 the composition is skewed to acidic residues; that stretch reads PGDDEEDEPE. The stretch at 768–1068 is one III repeat; sequence EKAVPIPEAS…IFVGFVIVTF (301 aa). A helical transmembrane segment spans residues 800 to 818; that stretch reads WFTNFILLFILLSSAALAA. The Extracellular portion of the chain corresponds to 819-830; that stretch reads EDPIRADSMRNQ. A helical membrane pass occupies residues 831–850; sequence ILEYFDYVFTAVFTVEIVLK. Residues 851–866 are Cytoplasmic-facing; it reads MTTYGAFLHKGSFCRN. A helical membrane pass occupies residues 867 to 885; it reads YFNILDLLVVAVSLISMGL. Topologically, residues 886–892 are extracellular; the sequence is ESSAISV. The chain crosses the membrane as a helical span at residues 893 to 911; it reads VKILRVLRVLRPLRAINRA. The Cytoplasmic segment spans residues 912–930; sequence KGLKHVVQCVFVAIRTIGN. A helical transmembrane segment spans residues 931–950; the sequence is IVLVTTLLQFMFACIGVQLF. The Extracellular portion of the chain corresponds to 951 to 1000; the sequence is KGKFYSCNDLSKMTEEECRGYYYIYKDGDPTQIELRPRQWIHNDFHFDNV. A disulfide bridge connects residues Cys957 and Cys968. A dihydropyridine binding region spans residues 988 to 1077; it reads RQWIHNDFHF…FQEQGETEYK (90 aa). Positions 1001–1021 form an intramembrane region, pore-forming; the sequence is LSAMMSLFTVSTFEGWPQLLY. The Selectivity filter of repeat III signature appears at 1012–1015; that stretch reads TFEG. Glu1014 lines the Ca(2+) pocket. The Extracellular portion of the chain corresponds to 1022–1038; it reads KAIDSNEEDTGPVYNNR. A helical transmembrane segment spans residues 1039–1060; it reads VEMAIFFIIYIILIAFFMMNIF. Residues 1061–1118 lie on the Cytoplasmic side of the membrane; it reads VGFVIVTFQEQGETEYKNCELDKNQRQCVQYALKARPLRCYIPKNPYQYQVWYVVTSS. The stretch at 1105 to 1384 is one IV repeat; the sequence is NPYQYQVWYV…LFVAVIMDNF (280 aa). A helical membrane pass occupies residues 1119–1140; the sequence is YFEYLMFALIMLNTICLGMQHY. An N-linked (GlcNAc...) asparagine glycan is attached at Asn1141. Over 1141–1148 the chain is Extracellular; the sequence is NQSEQMNH. Residues 1149-1170 form a helical membrane-spanning segment; the sequence is ISDILNVAFTIIFTLEMVLKLI. The Cytoplasmic portion of the chain corresponds to 1171-1180; the sequence is AFKPRGYFGD. A helical transmembrane segment spans residues 1181 to 1200; that stretch reads PWNVFDFLIVIGSIIDVILS. At 1201–1231 the chain is on the extracellular side; the sequence is EIDTFLASSGGLYCLGGGCGNVDPDESARIS. Residues 1232-1250 traverse the membrane as a helical segment; that stretch reads SAFFRLFRVMRLVKLLNRA. Topologically, residues 1251-1268 are cytoplasmic; that stretch reads EGVRTLLWTFIKSFQALP. The chain crosses the membrane as a helical span at residues 1269–1289; it reads YVALLIVMLFFIYAVIGMQMF. Topologically, residues 1290–1311 are extracellular; the sequence is GKIAMVDGTQINRNNNFQTFPQ. Residues 1312–1330 constitute an intramembrane region (pore-forming); the sequence is AVLLLFRCATGEAWQEILL. A Selectivity filter of repeat IV motif is present at residues 1321–1324; the sequence is TGEA. Residues 1331-1356 are Extracellular-facing; that stretch reads ACSYGKLCDPESDYAPGEEHTCGTNF. The segment at 1337–1403 is dihydropyridine binding; sequence LCDPESDYAP…LGPHHLDEFK (67 aa). Cys1338 and Cys1352 are disulfide-bonded. Phenylalkylamine binding stretches follow at residues 1349–1391 and 1349–1392; these read EHTC…TRDW and EHTC…RDWS. The helical transmembrane segment at 1357–1381 threads the bilayer; the sequence is AYYYFISFYMLCAFLIINLFVAVIM. The Cytoplasmic segment spans residues 1382–1852; the sequence is DNFDYLTRDW…PEGGAVPWEP (471 aa). The interval 1522-1542 is interaction with calmodulin; the sequence is KFYATFLIQEHFRKFMKRQEE. A Phosphoserine; by PKA and CAMK2 modification is found at Ser1575. Thr1579 carries the phosphothreonine modification. Phosphoserine; by PKA is present on Ser1617. 2 disordered regions span residues 1702-1721 and 1727-1762; these read GPLS…HVDK and TQRG…PTSR. The segment covering 1747–1757 has biased composition (basic and acidic residues); it reads KAEHPVQKEGK.

Belongs to the calcium channel alpha-1 subunit (TC 1.A.1.11) family. CACNA1S subfamily. In terms of assembly, component of a calcium channel complex consisting of a pore-forming alpha subunit (CACNA1S) and the ancillary subunits CACNB1 or CACNB2, CACNG1 and CACNA2D1. The channel complex contains alpha, beta, gamma and delta subunits in a 1:1:1:1 ratio, i.e. it contains either CACNB1 or CACNB2. CACNA1S channel activity is modulated by the auxiliary subunits (CACNB1 or CACNB2, CACNG1 and CACNA2D1). Interacts with DYSF and JSRP1. Interacts with RYR1. Interacts with STAC, STAC2 and STAC3 (via their SH3 domains). Interacts with CALM. Post-translationally, the alpha-1S subunit is found in two isoforms in the skeletal muscle: a minor form of 212 kDa containing the complete amino acid sequence, and a major form of 190 kDa derived from the full-length form by post-translational proteolysis close to Phe-1690. In terms of processing, phosphorylated. Phosphorylation by PKA activates the calcium channel. Both the minor and major forms are phosphorylated in vitro by PKA. Phosphorylation at Ser-1575 is involved in beta-adrenergic-mediated regulation of the channel.

It is found in the cell membrane. The protein resides in the sarcolemma. Its subcellular location is the T-tubule. The enzyme catalyses Ca(2+)(in) = Ca(2+)(out). Channel activity is blocked by dihydropyridines (DHP), phenylalkylamines, and by benzothiazepines. Functionally, pore-forming, alpha-1S subunit of the voltage-gated calcium channel that gives rise to L-type calcium currents in skeletal muscle. Calcium channels containing the alpha-1S subunit play an important role in excitation-contraction coupling in skeletal muscle via their interaction with RYR1, which triggers Ca(2+) release from the sarcplasmic reticulum and ultimately results in muscle contraction. Long-lasting (L-type) calcium channels belong to the 'high-voltage activated' (HVA) group. The protein is Voltage-dependent L-type calcium channel subunit alpha-1S (Cacna1s) of Mus musculus (Mouse).